The following is a 1142-amino-acid chain: ABC transporter F family member 4 (1142 aa).

The interval 1 to 564 (MGPKGKKKGQ…EDAFELAKKK (564 aa)) is disordered. Low complexity-rich tracts occupy residues 121 to 143 (PQPV…QQQQ), 153 to 166 (PQPV…APQK), and 182 to 195 (PQPV…APQK). Composition is skewed to acidic residues over residues 203 to 212 (SEDEDEEDEV) and 233 to 244 (EEEEEEEEEEIE). 2 stretches are compositionally biased toward basic residues: residues 249–261 (KGGK…KGGK) and 280–290 (KGGKKDKKKGS). Residues 295–306 (EEEEEEEEEEIE) are compositionally biased toward acidic residues. Basic and acidic residues predominate over residues 314–328 (NKKDQKKGGKGKHVE). The span at 329–340 (EEEEEEEEEEIE) shows a compositional bias: acidic residues. Basic residues predominate over residues 377 to 387 (KGGKKDKKKGS). Composition is skewed to acidic residues over residues 392–404 (EEEE…EEIE) and 441–451 (EEEEQEQEEEE). The segment covering 456 to 467 (SKSNKKDKKKGK) has biased composition (basic residues). Residues 471 to 480 (EEEEEEEEEE) show a composition bias toward acidic residues. Basic residues predominate over residues 485 to 496 (SKSNKKDKKKGS). Over residues 501–518 (EEEEEEEEEEEEEKEEEE) the composition is skewed to acidic residues. The span at 530 to 548 (AKKVKKVDKKEKKKEKEKK) shows a compositional bias: basic residues. ABC transporter domains follow at residues 604-857 (IKFD…RSKE) and 923-1139 (LVFK…DNMV). ATP contacts are provided by residues 636-643 (GRNGIGKS) and 956-963 (GMNGVGKS).

It belongs to the ABC transporter superfamily.

In Dictyostelium discoideum (Social amoeba), this protein is ABC transporter F family member 4 (abcF4).